We begin with the raw amino-acid sequence, 230 residues long: MPLPDTMFCAQQIHIPPELPDILKQFTKAAIRTQPADVLRWSAGYFSALSRGDPLPVKDRMEMPTATQKTDTGLTQGLLKVLHKQCHHKRYVELTDLEQKWKNLCLPKEKFKALLQLDPCENKIKWINFLALGCSMLGGSLNTALKHLCEILTDDPEGGPARIPFKTFSYVYRYLARLDSDVSPLETESYLASLKENIDARKNGMIGLSDFFFPKRKLLESIENSEDVGH.

The RIIa domain occupies 17 to 46 (PELPDILKQFTKAAIRTQPADVLRWSAGYF).

The protein belongs to the ropporin family. Component of the axonemal radial spoke complex 1 (RS1), at least composed of spoke head proteins RSPH1, RSPH3, RSPH9 and the cilia-specific component RSPH4A or sperm-specific component RSPH6A, spoke stalk proteins RSPH14, DNAJB13, DYDC1, ROPN1L and NME5, and the anchor protein IQUB. Interacts with FSCB; the interaction increases upon spermatozoa capacitation conditions. May interact with AKAP3. Interacts with CFAP61. In terms of processing, sumoylated, sumoylation decreases upon spermatozoa capacitation conditions.

Its subcellular location is the cell projection. It is found in the cilium. It localises to the flagellum. In terms of biological role, functions as part of axonemal radial spoke complexes that play an important part in the motility of sperm and cilia. Important for male fertility. With ROPN1, involved in fibrous sheath integrity and sperm motility, plays a role in PKA-dependent signaling processes required for spermatozoa capacitation. The chain is Ropporin-1-like protein (ROPN1L) from Homo sapiens (Human).